Here is a 1835-residue protein sequence, read N- to C-terminus: Urea amidolyase (1835 aa).

Residues 122–129 (GAIIVGKT) and K747 each bind ATP. Positions 632–1075 (LFDTVLIANR…STNILNSYQY (444 aa)) constitute a Biotin carboxylation domain. Residues 751 to 948 (RQIAQKAGVP…LVEWMIRIAA (198 aa)) enclose the ATP-grasp domain. The residue at position 803 (S803) is a Phosphoserine. The ATP site is built by E830 and N865. The region spanning 1754 to 1832 (DEEEDFPEGA…DSGDIVAVIE (79 aa)) is the Biotinyl-binding domain. K1798 is subject to N6-biotinyllysine.

In terms of assembly, monomer. The cofactor is biotin.

It carries out the reaction urea + hydrogencarbonate + ATP = urea-1-carboxylate + ADP + phosphate + H(+). The catalysed reaction is urea-1-carboxylate + H2O + 3 H(+) = 2 NH4(+) + 2 CO2. It participates in nitrogen metabolism; urea degradation; CO(2) and NH(3) from urea (allophanate route): step 1/2. The protein operates within nitrogen metabolism; urea degradation; CO(2) and NH(3) from urea (allophanate route): step 2/2. Functionally, hydrolysis of urea to ammonia and CO(2). The polypeptide is Urea amidolyase (DUR1,2) (Saccharomyces cerevisiae (strain ATCC 204508 / S288c) (Baker's yeast)).